The primary structure comprises 147 residues: Transcription elongation factor Spt5 (147 aa).

Residues Lys91 to Glu122 enclose the KOW domain.

The protein belongs to the archaeal Spt5 family. In terms of assembly, heterodimer composed of Spt4 and Spt5. Interacts with RNA polymerase (RNAP). Forms a homodimer in solution.

Its function is as follows. Stimulates transcription elongation. This Methanocaldococcus jannaschii (strain ATCC 43067 / DSM 2661 / JAL-1 / JCM 10045 / NBRC 100440) (Methanococcus jannaschii) protein is Transcription elongation factor Spt5.